The primary structure comprises 129 residues: Lysozyme C (129 aa).

In terms of domain architecture, C-type lysozyme spans lysine 1–leucine 129. Intrachain disulfides connect cysteine 6/cysteine 127, cysteine 30/cysteine 115, cysteine 64/cysteine 80, and cysteine 76/cysteine 94. Active-site residues include glutamate 35 and aspartate 52.

The protein belongs to the glycosyl hydrolase 22 family. Monomer.

The protein localises to the secreted. The enzyme catalyses Hydrolysis of (1-&gt;4)-beta-linkages between N-acetylmuramic acid and N-acetyl-D-glucosamine residues in a peptidoglycan and between N-acetyl-D-glucosamine residues in chitodextrins.. Functionally, lysozymes have primarily a bacteriolytic function; those in tissues and body fluids are associated with the monocyte-macrophage system and enhance the activity of immunoagents. The chain is Lysozyme C (LYZ) from Ortalis vetula (Plain chachalaca).